The primary structure comprises 197 residues: Thymidylate kinase (197 aa).

An ATP-binding site is contributed by 7-14; that stretch reads GIDGCGKS.

This sequence belongs to the thymidylate kinase family.

It carries out the reaction dTMP + ATP = dTDP + ADP. Functionally, phosphorylation of dTMP to form dTDP in both de novo and salvage pathways of dTTP synthesis. This Fervidobacterium nodosum (strain ATCC 35602 / DSM 5306 / Rt17-B1) protein is Thymidylate kinase.